The chain runs to 351 residues: Transmembrane protein 115 (351 aa).

The Cytoplasmic segment spans residues 1–19; the sequence is MQRALPGARQHLGAILSSA. The segment at 1–205 is mediates homooligomerization; that stretch reads MQRALPGARQ…FGLISSWVYL (205 aa). A helical membrane pass occupies residues 20–40; that stretch reads SVVVKALCAAVLFLYLLSFAV. Residues 41–97 lie on the Lumenal side of the membrane; it reads DTGCLAVTPGYLFPPNFWIWTLATHGLMEQHVWDVAISLATVVVAGRLLEPLWGALE. A helical membrane pass occupies residues 98-118; the sequence is LLIFFSVVNVSVGLLGAFAYL. The Cytoplasmic segment spans residues 119–126; the sequence is LTYMASFN. The chain crosses the membrane as a helical span at residues 127-147; sequence LVYLFTVRIHGALGFLGGVLV. Topologically, residues 148-165 are lumenal; that stretch reads ALKQTMGDCVVLRVPQVR. The chain crosses the membrane as a helical span at residues 166 to 186; the sequence is VSVVPMLLLGLLLLLRLATLL. Residues 187–351 lie on the Cytoplasmic side of the membrane; sequence QSPALASYGF…ITFEAAPPTL (165 aa). The interval 206-229 is mediates localization to the Golgi; it reads RFYQRHSRGRGDMADHFAFATFFP. The disordered stretch occupies residues 300-351; the sequence is DQSVWPSMDDDEEEAGAKVDSPMPSDKAPTLPGKGAVPESSLITFEAAPPTL. Thr-329 bears the Phosphothreonine mark.

It belongs to the TMEM115 family. As to quaternary structure, homooligomer. Interacts with COPB1. May interact with LMAN1. Interacts with the COG complex; probably through COG3.

The protein resides in the golgi apparatus. It localises to the golgi stack membrane. Functionally, may play a role in retrograde transport of proteins from the Golgi to the endoplasmic reticulum. May indirectly play a role in protein glycosylation in the Golgi. The sequence is that of Transmembrane protein 115 from Bos taurus (Bovine).